A 341-amino-acid polypeptide reads, in one-letter code: Probable UDP-glucuronate 4-epimerase (341 aa).

Tyr152 acts as the Proton acceptor in catalysis.

This sequence belongs to the NAD(P)-dependent epimerase/dehydratase family. The cofactor is NAD(+).

The enzyme catalyses UDP-alpha-D-glucuronate = UDP-alpha-D-galacturonate. This chain is Probable UDP-glucuronate 4-epimerase, found in Rhizobium meliloti (strain 1021) (Ensifer meliloti).